Consider the following 107-residue polypeptide: RNA silencing suppressor (107 aa).

The basic stretch occupies residues 46 to 49 (RRRR). The C4-type zinc-finger motif lies at 56–78 (CHRCYRVYPPLFPEISRCDNRTC).

It belongs to the carlaviruses nucleic acid-binding protein family.

Functionally, suppressor of viral-induced RNA silencing. The potential mechanism of action is based on sequestering siRNAs. This is RNA silencing suppressor from Chrysanthemum morifolium (Florist's daisy).